Reading from the N-terminus, the 130-residue chain is Small ribosomal subunit protein uS9 (130 aa).

Belongs to the universal ribosomal protein uS9 family.

The sequence is that of Small ribosomal subunit protein uS9 from Streptococcus pyogenes serotype M1.